Reading from the N-terminus, the 247-residue chain is 6-phosphogluconolactonase (247 aa).

The protein belongs to the glucosamine/galactosamine-6-phosphate isomerase family. 6-phosphogluconolactonase subfamily.

The catalysed reaction is 6-phospho-D-glucono-1,5-lactone + H2O = 6-phospho-D-gluconate + H(+). It functions in the pathway carbohydrate degradation; pentose phosphate pathway; D-ribulose 5-phosphate from D-glucose 6-phosphate (oxidative stage): step 2/3. Its function is as follows. Hydrolysis of 6-phosphogluconolactone to 6-phosphogluconate. This chain is 6-phosphogluconolactonase (pgl), found in Mycobacterium bovis (strain ATCC BAA-935 / AF2122/97).